The sequence spans 523 residues: Flavonoid 3',5'-hydroxylase (523 aa).

Cys460 is a binding site for heme.

The protein belongs to the cytochrome P450 family. Heme serves as cofactor.

It carries out the reaction a 3',5'-unsubstituted flavanone + 2 reduced [NADPH--hemoprotein reductase] + 2 O2 = a 3',5'-dihydroxyflavanone + 2 oxidized [NADPH--hemoprotein reductase] + 2 H2O + 2 H(+). It participates in pigment biosynthesis; anthocyanin biosynthesis. Catalyzes the 3'5'-hydroxylation of naringenin and eriodictyol to form 5,7,3,'4',5'-pentahydroxyflavanone and 3',5'-hydroxylation of dihydrokaempferol and dihydroquercetin to form dihydromyricetin. This Campanula medium (Canterbury bells) protein is Flavonoid 3',5'-hydroxylase (CYP75A6).